The chain runs to 116 residues: Toxin CSTX-10 (116 aa).

The first 20 residues, 1 to 20 (MKVLVIFAVLSLVIFSNCSA), serve as a signal peptide directing secretion. Positions 21-47 (ETDEDFFGEESFEADDIIPFIAKEQVR) are excised as a propeptide. 4 disulfide bridges follow: cysteine 53–cysteine 68, cysteine 60–cysteine 77, cysteine 67–cysteine 94, and cysteine 79–cysteine 92.

As to expression, expressed by the venom gland.

The protein localises to the secreted. The protein resides in the target cell membrane. Its function is as follows. Spider venom toxin that shows calcium channel blocking activity and exhibits cytolytic activity by affecting the outer leaflet curvature and/or pore formation across the membrane. It blocks L-type calcium channels (Cav1/CACNA1) in mammalian neurons at nanomolar concentrations. Furthermore, it produces a slow voltage-independent block of mid/low and high voltage-activated calcium channels in cockroach neurons. Potassium ions, histamine, M-ctenitoxin-Cs1a (AC P83619), CSTX-9 (AC P58604), and CSTX-13 (AC P83919) synergistically increase the insecticidal activity of this toxin. In vivo, it causes paralysis in blow flies and provokes death in drosophila. The sequence is that of Toxin CSTX-10 from Cupiennius salei (American wandering spider).